A 188-amino-acid polypeptide reads, in one-letter code: MKAQTTSKDSLILRQEVVGARRPSNYFWAVIVSIGGLGFLLAGLSSYLKVNLLLVSDTSALQFIPQGVALLFYGTAGTLLAIYLWLSLLWNVGGGYNEFNKETGKVKIFRWGYPGKNRRIDLDWPLEDAQAVRAEVREGLNPKRELFLRIKQRRDIPLTRVGDPMSLSELENQGAELARFLEIPLEGL.

A run of 2 helical transmembrane segments spans residues 26 to 46 (YFWA…GLSS) and 70 to 90 (LLFY…SLLW).

This sequence belongs to the Ycf4 family.

It localises to the cellular thylakoid membrane. Seems to be required for the assembly of the photosystem I complex. In Microcystis aeruginosa (strain NIES-843 / IAM M-2473), this protein is Photosystem I assembly protein Ycf4.